We begin with the raw amino-acid sequence, 488 residues long: MSFLPGMTPVTLSNFSWALEDRMLEGNSTTTPTRQLMPLVVVLSSVSLVTVALNLLVLYAVRSERKLHTVGNLYIVSLSVADLIVGAVVMPMSILYLHRSAWILGRPLCLFWLSMDYVASTASIFSVFILCIDRYRSVQQPLRYLRYRTKTRASATILGAWLLSFLWVIPILGWHHFMAPTSEPREKKCETDFYDVTWFKVMTAIINFYLPTLLMLWFYIRIYKAVRRHCQHRQLINSSLPSFSEMKLKLENAKVDTRRMGKESPWEDPKRCSKDASGVHTPMPSSQHLVDMPCAAVLSEDEGGEVGTRQMPMLAVGDGRCCEALNHMHSQLELSGQSRATHSISARPEEWTVVDGQSFPITDSDTSTEAAPMGGQPRSGSNSGLDYIKFTWRRLRSHSRQYTSGLHLNRERKAAKQLGCIMAAFILCWIPYFVFFMVIAFCKSCSNEPVHMFTIWLGYLNSTLNPLIYPLCNENFRKTFKRILRIPP.

Topologically, residues 1 to 38 are extracellular; the sequence is MSFLPGMTPVTLSNFSWALEDRMLEGNSTTTPTRQLMP. Residues asparagine 14 and asparagine 27 are each glycosylated (N-linked (GlcNAc...) asparagine). The chain crosses the membrane as a helical span at residues 39–59; the sequence is LVVVLSSVSLVTVALNLLVLY. The Cytoplasmic segment spans residues 60–73; sequence AVRSERKLHTVGNL. A helical transmembrane segment spans residues 74-98; that stretch reads YIVSLSVADLIVGAVVMPMSILYLH. The Extracellular segment spans residues 99-106; sequence RSAWILGR. A helical transmembrane segment spans residues 107–132; that stretch reads PLCLFWLSMDYVASTASIFSVFILCI. A disulfide bridge links cysteine 109 with cysteine 189. Residues aspartate 116 and threonine 121 each contribute to the histamine site. An important for agonist binding region spans residues 116–121; the sequence is DYVAST. The Cytoplasmic portion of the chain corresponds to 133-153; it reads DRYRSVQQPLRYLRYRTKTRA. Residues threonine 149 and threonine 151 each carry the phosphothreonine modification. A helical transmembrane segment spans residues 154–173; the sequence is SATILGAWLLSFLWVIPILG. The Extracellular portion of the chain corresponds to 174–197; the sequence is WHHFMAPTSEPREKKCETDFYDVT. Residues 198–220 form a helical membrane-spanning segment; sequence WFKVMTAIINFYLPTLLMLWFYI. Asparagine 207 lines the histamine pocket. Over 221–417 the chain is Cytoplasmic; the sequence is RIYKAVRRHC…LNRERKAAKQ (197 aa). Serine 239 carries the post-translational modification Phosphoserine. Over residues 259–274 the composition is skewed to basic and acidic residues; sequence RMGKESPWEDPKRCSK. The tract at residues 259–285 is disordered; that stretch reads RMGKESPWEDPKRCSKDASGVHTPMPS. Phosphoserine occurs at positions 345, 381, 383, 397, and 399. A helical transmembrane segment spans residues 418-441; it reads LGCIMAAFILCWIPYFVFFMVIAF. Residues 425 to 429 are important for agonist binding; the sequence is FILCW. Tyrosine 432 serves as a coordination point for histamine. Cysteine 442 and cysteine 445 are disulfide-bonded. Topologically, residues 442–447 are extracellular; the sequence is CKSCSN. Residues 448 to 470 form a helical membrane-spanning segment; it reads EPVHMFTIWLGYLNSTLNPLIYP. The Cytoplasmic segment spans residues 471-488; that stretch reads LCNENFRKTFKRILRIPP.

This sequence belongs to the G-protein coupled receptor 1 family. In terms of processing, phosphorylation at sites in the second and third cytoplasmic loops independently contribute to agonist-induced receptor down-regulation.

The protein localises to the cell membrane. Functionally, G-protein-coupled receptor for histamine, a biogenic amine that functions as an immune modulator and a neurotransmitter. Through the H1 receptor, histamine mediates the contraction of smooth muscles and increases capillary permeability due to contraction of terminal venules. Also mediates neurotransmission in the central nervous system and thereby regulates circadian rhythms, emotional and locomotor activities as well as cognitive functions. The chain is Histamine H1 receptor from Cavia porcellus (Guinea pig).